A 144-amino-acid polypeptide reads, in one-letter code: Flagellar assembly factor FliW (144 aa).

Belongs to the FliW family. Monomer. One copy interacts with the each alpha-helical wing of the CsrA homodimer, yielding a FliW-CsrA(2)-FliW complex. Comparison with a CsrA-mRNA structure (2JPP) suggests CsrA cannot bind both mRNA and FliW at the same time. Interacts with flagellin.

It localises to the cytoplasm. Functionally, acts as an anti-CsrA protein, binds CsrA and prevents it from repressing translation of its target genes, one of which is flagellin. Binds to flagellin and participates in the assembly of the flagellum. Its function is as follows. Allosterically inhibits CsrA binding to mRNA in a non-competitive fashion by preventing CsrA binding to the 5'-UTR. This chain is Flagellar assembly factor FliW, found in Geobacillus thermodenitrificans (strain NG80-2).